Here is a 380-residue protein sequence, read N- to C-terminus: Cytochrome b (380 aa).

Helical transmembrane passes span 33–53, 77–98, 113–133, and 178–198; these read FGSL…FLAM, WTIR…FLHI, WNIG…GYVL, and FFTF…LHLL. Positions 83 and 97 each coordinate heme b. Positions 182 and 196 each coordinate heme b. An a ubiquinone-binding site is contributed by histidine 201. Helical transmembrane passes span 226 to 246, 288 to 308, 320 to 340, and 347 to 367; these read IKDI…TLFS, LGGV…PILH, LSQL…WIGG, and FITI…FLMP.

The protein belongs to the cytochrome b family. As to quaternary structure, the cytochrome bc1 complex contains 11 subunits: 3 respiratory subunits (MT-CYB, CYC1 and UQCRFS1), 2 core proteins (UQCRC1 and UQCRC2) and 6 low-molecular weight proteins (UQCRH/QCR6, UQCRB/QCR7, UQCRQ/QCR8, UQCR10/QCR9, UQCR11/QCR10 and a cleavage product of UQCRFS1). This cytochrome bc1 complex then forms a dimer. It depends on heme b as a cofactor.

It localises to the mitochondrion inner membrane. In terms of biological role, component of the ubiquinol-cytochrome c reductase complex (complex III or cytochrome b-c1 complex) that is part of the mitochondrial respiratory chain. The b-c1 complex mediates electron transfer from ubiquinol to cytochrome c. Contributes to the generation of a proton gradient across the mitochondrial membrane that is then used for ATP synthesis. This is Cytochrome b (MT-CYB) from Gorilla gorilla gorilla (Western lowland gorilla).